A 312-amino-acid chain; its full sequence is L-type lectin-like domain-containing protein C126.08c (312 aa).

Positions 1 to 22 are cleaved as a signal peptide; it reads MFFSVKNVFLLGIFGFVLGALA. Topologically, residues 23–280 are extracellular; that stretch reads ETSHLERLSL…QKKGSFKKRL (258 aa). An L-type lectin-like domain is found at 24-248; the sequence is TSHLERLSLE…EIASILSRTI (225 aa). A helical membrane pass occupies residues 281-301; sequence IILLLSLIVIFSIFALRSYQV. The Cytoplasmic portion of the chain corresponds to 302 to 312; sequence QQEKNRRTTVL.

It localises to the membrane. The protein localises to the endoplasmic reticulum. It is found in the golgi apparatus. The protein resides in the vacuole. This chain is L-type lectin-like domain-containing protein C126.08c, found in Schizosaccharomyces pombe (strain 972 / ATCC 24843) (Fission yeast).